The following is a 304-amino-acid chain: WW domain-binding protein 1 (304 aa).

The disordered stretch occupies residues 1–26 (MARASSRNSSEEAWGSLQAPQQQQSP). 2 consecutive short sequence motifs (PPxY motif) follow at residues 159–162 (PPAY) and 172–176 (PPPPY). Disordered stretches follow at residues 206-235 (TNVEGVSSQQSALPHQEGEPRAGLSPVHIP) and 252-304 (CPCP…GDIP). Over residues 209-218 (EGVSSQQSAL) the composition is skewed to polar residues.

Binds to the WW domain of YAP1, WWP1 and WWP2. Interacts with WWOX. Interacts with NEDD4.

In Mus musculus (Mouse), this protein is WW domain-binding protein 1 (Wbp1).